Reading from the N-terminus, the 874-residue chain is Alanine--tRNA ligase (874 aa).

Zn(2+) contacts are provided by histidine 563, histidine 567, cysteine 665, and histidine 669.

This sequence belongs to the class-II aminoacyl-tRNA synthetase family. Zn(2+) serves as cofactor.

The protein resides in the cytoplasm. The enzyme catalyses tRNA(Ala) + L-alanine + ATP = L-alanyl-tRNA(Ala) + AMP + diphosphate. In terms of biological role, catalyzes the attachment of alanine to tRNA(Ala) in a two-step reaction: alanine is first activated by ATP to form Ala-AMP and then transferred to the acceptor end of tRNA(Ala). Also edits incorrectly charged Ser-tRNA(Ala) and Gly-tRNA(Ala) via its editing domain. The chain is Alanine--tRNA ligase from Haemophilus ducreyi (strain 35000HP / ATCC 700724).